Reading from the N-terminus, the 893-residue chain is Probable ion channel CASTOR (893 aa).

Positions 1–94 are disordered; it reads MPLDPDSSPA…APRRRDPRYA (94 aa). Residues 65–85 show a composition bias toward pro residues; it reads PLPPPEQQKQQQPPPTTPPPA. The chain crosses the membrane as a helical span at residues 132–152; that stretch reads TLRWSGMVSVAAIVLCFSSLV. A coiled-coil region spans residues 156 to 178; the sequence is SSLHDQVHHLKAQLAEATTKLQS. 3 consecutive transmembrane segments (helical) span residues 210 to 230, 266 to 286, and 318 to 338; these read LLLS…MDLF, LVLL…LYGV, and LVSV…LGLV. RCK N-terminal domains are found at residues 359 to 500 and 619 to 792; these read QSHT…ETVV and PERI…DYVL. A coiled-coil region spans residues 389–415; the sequence is TIVVMAEKDKEEMEADIAKMEFDLKGT.

It belongs to the castor/pollux (TC 1.A.1.23) family. In terms of tissue distribution, expressed in roots, leaves, stems and panicles.

The protein localises to the nucleus membrane. In terms of biological role, required for mycorrhizal symbiosis. The chain is Probable ion channel CASTOR from Oryza sativa subsp. japonica (Rice).